A 289-amino-acid polypeptide reads, in one-letter code: Diaminopimelate epimerase (289 aa).

Substrate contacts are provided by Asn13, Gln47, and Asn67. Residue Cys76 is the Proton donor of the active site. Residues 77–78 (GN), Asn167, Asn200, and 218–219 (ER) contribute to the substrate site. Catalysis depends on Cys227, which acts as the Proton acceptor. 228-229 (GT) is a substrate binding site.

Belongs to the diaminopimelate epimerase family. As to quaternary structure, homodimer.

The protein localises to the cytoplasm. The enzyme catalyses (2S,6S)-2,6-diaminopimelate = meso-2,6-diaminopimelate. It functions in the pathway amino-acid biosynthesis; L-lysine biosynthesis via DAP pathway; DL-2,6-diaminopimelate from LL-2,6-diaminopimelate: step 1/1. Its function is as follows. Catalyzes the stereoinversion of LL-2,6-diaminopimelate (L,L-DAP) to meso-diaminopimelate (meso-DAP), a precursor of L-lysine and an essential component of the bacterial peptidoglycan. The chain is Diaminopimelate epimerase from Burkholderia pseudomallei (strain K96243).